Consider the following 483-residue polypeptide: Matrix metalloproteinase-20 (483 aa).

An N-terminal signal peptide occupies residues 1-22 (MKVLPASGLAVFLIMALKFSTA). Residues 23–107 (APSLVAASPR…PRCGVPDVAN (85 aa)) constitute a propeptide that is removed on maturation. Residues 98–105 (PRCGVPDV) carry the Cysteine switch motif. Zn(2+) is bound at residue Cys-100. 3 residues coordinate Ca(2+): Glu-164, Ala-165, and Asp-166. 2 residues coordinate Zn(2+): His-176 and Asp-178. The Ca(2+) site is built by Asp-183, Gly-184, Arg-186, and Thr-188. His-191 is a Zn(2+) binding site. Ca(2+) contacts are provided by Glu-197, Gly-198, Gly-200, and Asp-202. His-204 contacts Zn(2+). 2 residues coordinate Ca(2+): Asp-206 and Glu-209. His-226 contacts Zn(2+). Residue Glu-227 is part of the active site. Zn(2+) contacts are provided by His-230 and His-236. 4 Hemopexin repeats span residues 293–343 (PDLC…FPQL), 344–389 (MSNV…GFPR), 391–439 (VQQI…FSGV), and 440–483 (NGQI…WIGC). Cys-296 and Cys-483 are joined by a disulfide.

This sequence belongs to the peptidase M10A family. Zn(2+) is required as a cofactor. Requires Ca(2+) as cofactor. In terms of processing, autoactivates at least at the 107-Asn-|-Tyr-108 site. Expressed specifically in the enamel organ.

Its subcellular location is the secreted. It is found in the extracellular space. The protein resides in the extracellular matrix. Degrades amelogenin, the major protein component of the enamel matrix and two of the macromolecules characterizing the cartilage extracellular matrix: aggrecan and the cartilage oligomeric matrix protein (COMP). May play a central role in tooth enamel formation. Cleaves aggrecan at the '360-Asn-|-Phe-361' site. The polypeptide is Matrix metalloproteinase-20 (MMP20) (Homo sapiens (Human)).